The primary structure comprises 335 residues: Rho guanine nucleotide exchange factor 39 (335 aa).

In terms of domain architecture, DH spans 22-197 (KRACTARELL…SETAQRVHTI (176 aa)). Residues 227–331 (WFLRQGWLLV…WYHSLTLAIS (105 aa)) enclose the PH domain.

It localises to the cell membrane. In terms of biological role, promotes cell proliferation. This chain is Rho guanine nucleotide exchange factor 39 (ARHGEF39), found in Bos taurus (Bovine).